Reading from the N-terminus, the 91-residue chain is Cell division protein CrgA (91 aa).

Positions 1-24 (MPKSKITTEGSALPQSSSSATNRT) are enriched in polar residues. Residues 1 to 28 (MPKSKITTEGSALPQSSSSATNRTPVKI) are disordered. The next 2 helical transmembrane spans lie at 38–58 (IAIMLGLMLLGLLWLVVNYLA) and 68–88 (LGPWNYGIGFGLAIIGLLMTM).

This sequence belongs to the CrgA family.

It is found in the cell membrane. In terms of biological role, involved in cell division. This is Cell division protein CrgA from Corynebacterium aurimucosum (strain ATCC 700975 / DSM 44827 / CIP 107346 / CN-1) (Corynebacterium nigricans).